Consider the following 244-residue polypeptide: MWLGDYSLLNLLGIFLQATFIQNILLSTFLGMCSYLACSSRLSTANGLGMSVALVLTITGSINWLVHYFITKPGALAWLSPALANIDLSFLELIMFIVVIAAFTQILEVLLERFSRNLYLALGIFLPLIAVNCAILGGVLFGITRNYPFLPMVVFSLGSGCGWWLAIVLFATIREKLAYSDVPQHLRGTGISFITTGLMAMAFMGLTGIDISKPTTSKPAFVTNIATDSPQPNTHSSSEEPKAS.

The next 6 helical transmembrane spans lie at 11–31 (LLGI…TFLG), 50–70 (MSVA…HYFI), 90–110 (FLEL…LEVL), 123–143 (GIFL…LFGI), 153–173 (VVFS…FATI), and 191–211 (ISFI…GIDI). The segment covering 222–236 (VTNIATDSPQPNTHS) has biased composition (polar residues). The segment at 222 to 244 (VTNIATDSPQPNTHSSSEEPKAS) is disordered.

The protein belongs to the NqrDE/RnfAE family. As to quaternary structure, composed of six subunits; NqrA, NqrB, NqrC, NqrD, NqrE and NqrF.

The protein resides in the cell inner membrane. The catalysed reaction is a ubiquinone + n Na(+)(in) + NADH + H(+) = a ubiquinol + n Na(+)(out) + NAD(+). Its function is as follows. NQR complex catalyzes the reduction of ubiquinone-1 to ubiquinol by two successive reactions, coupled with the transport of Na(+) ions from the cytoplasm to the periplasm. NqrA to NqrE are probably involved in the second step, the conversion of ubisemiquinone to ubiquinol. This chain is Na(+)-translocating NADH-quinone reductase subunit E, found in Chlamydia trachomatis serovar A (strain ATCC VR-571B / DSM 19440 / HAR-13).